A 318-amino-acid chain; its full sequence is Ankyrin repeat and SOCS box protein 7 (318 aa).

7 ANK repeats span residues 13–42, 46–75, 80–109, 116–145, 149–178, 180–208, and 213–242; these read QEESQIQAAVAAGDVHTVRKMLEQGYSPNG, NGWTLLHFSAARGKERCVRVFLEHGADPTV, GGFTALHYAAMHGRARIARLMLESEYRSDI, DGWTPLHVAAHYGRDSFVRLLLEFKAEVDP, KGTTPLQLAIIRERSSCVKILLDHNANIDI, NGFLLRYAVIKSNHSYCRMFLQRGADTNL, and DGQTPLHLSALRDDVLCARMLYNYGADTNT. The 54-residue stretch at 265–318 folds into the SOCS box domain; the sequence is LDFLQEVTRQPRNLQDLCRIKIRQCIGLQNLKLLDELPIAKVMKDYLKHKSDDI.

This sequence belongs to the ankyrin SOCS box (ASB) family. Interacts with CUL5. Interacts with RNF7. Interacts with PSRC1.

It functions in the pathway protein modification; protein ubiquitination. Its function is as follows. Probable substrate-recognition component of a SCF-like ECS (Elongin-Cullin-SOCS-box protein) E3 ubiquitin-protein ligase complex which mediates the ubiquitination and subsequent proteasomal degradation of target proteins. Plays a role in spindle dynamics and genome integrity by targeting the mitotic progression protein PSRC1 for proteasomal degradation in a cell cycle-dependent manner. Also participates in meiosis by mediating the proper attachment between kinetochores and microtubules. The sequence is that of Ankyrin repeat and SOCS box protein 7 (ASB7) from Pongo abelii (Sumatran orangutan).